Consider the following 243-residue polypeptide: 1-(5-phosphoribosyl)-5-[(5-phosphoribosylamino)methylideneamino] imidazole-4-carboxamide isomerase (243 aa).

Catalysis depends on aspartate 17, which acts as the Proton acceptor. Aspartate 138 acts as the Proton donor in catalysis.

Belongs to the HisA/HisF family.

It is found in the cytoplasm. It catalyses the reaction 1-(5-phospho-beta-D-ribosyl)-5-[(5-phospho-beta-D-ribosylamino)methylideneamino]imidazole-4-carboxamide = 5-[(5-phospho-1-deoxy-D-ribulos-1-ylimino)methylamino]-1-(5-phospho-beta-D-ribosyl)imidazole-4-carboxamide. It functions in the pathway amino-acid biosynthesis; L-histidine biosynthesis; L-histidine from 5-phospho-alpha-D-ribose 1-diphosphate: step 4/9. The polypeptide is 1-(5-phosphoribosyl)-5-[(5-phosphoribosylamino)methylideneamino] imidazole-4-carboxamide isomerase (Deinococcus geothermalis (strain DSM 11300 / CIP 105573 / AG-3a)).